A 182-amino-acid polypeptide reads, in one-letter code: Ribosome maturation factor RimM (182 aa).

In terms of domain architecture, PRC barrel spans 103–182 (GDDYYWKDLM…VIEADWDPGF (80 aa)).

Belongs to the RimM family. As to quaternary structure, binds ribosomal protein uS19.

It localises to the cytoplasm. In terms of biological role, an accessory protein needed during the final step in the assembly of 30S ribosomal subunit, possibly for assembly of the head region. Essential for efficient processing of 16S rRNA. May be needed both before and after RbfA during the maturation of 16S rRNA. It has affinity for free ribosomal 30S subunits but not for 70S ribosomes. This is Ribosome maturation factor RimM from Serratia proteamaculans (strain 568).